A 396-amino-acid polypeptide reads, in one-letter code: Probable glucan endo-1,6-beta-glucosidase B (396 aa).

The N-terminal stretch at 1 to 17 is a signal peptide; that stretch reads MIRRLAAFSALSGLATA. Asparagine 30 is a glycosylation site (N-linked (GlcNAc...) asparagine). Catalysis depends on glutamate 219, which acts as the Proton donor. Asparagine 272 is a glycosylation site (N-linked (GlcNAc...) asparagine). Catalysis depends on glutamate 320, which acts as the Nucleophile.

This sequence belongs to the glycosyl hydrolase 5 (cellulase A) family.

The protein resides in the secreted. It carries out the reaction Random hydrolysis of (1-&gt;6)-linkages in (1-&gt;6)-beta-D-glucans.. Functionally, beta-glucanases participate in the metabolism of beta-glucan, the main structural component of the cell wall. Acts on lutean, pustulan and 1,6-oligo-beta-D-glucosides. In Aspergillus fumigatus (strain ATCC MYA-4609 / CBS 101355 / FGSC A1100 / Af293) (Neosartorya fumigata), this protein is Probable glucan endo-1,6-beta-glucosidase B (exgB).